An 89-amino-acid polypeptide reads, in one-letter code: Small ribosomal subunit protein uS15 (89 aa).

This sequence belongs to the universal ribosomal protein uS15 family. In terms of assembly, part of the 30S ribosomal subunit. Forms a bridge to the 50S subunit in the 70S ribosome, contacting the 23S rRNA.

Functionally, one of the primary rRNA binding proteins, it binds directly to 16S rRNA where it helps nucleate assembly of the platform of the 30S subunit by binding and bridging several RNA helices of the 16S rRNA. In terms of biological role, forms an intersubunit bridge (bridge B4) with the 23S rRNA of the 50S subunit in the ribosome. This is Small ribosomal subunit protein uS15 from Ectopseudomonas mendocina (strain ymp) (Pseudomonas mendocina).